The following is a 274-amino-acid chain: MSIDRILKQFLYKSIKPWQNKNIDDINQGEIYNIITNKSLTDNTINSVKRSFQNRLNENVNLTNVRKSYKKIKFVSFSLTKFYSNENNVFFVKLKIEIFVCDSFNTSLIRDFLNLITSEDILWIMYSVEPVILIHTDSKDKILQETYLKLECKAVKSQLYLNIYVIFDEKRVWTKNLVESFFSTIKNGKILNISNVPKLGGLCFCYVLNNLLLKANKKNQLAEIKIYQHTKYEIPSKYKIKFINESPLFLREYTGSLNFLYILLSMLLDNITNK.

Its subcellular location is the plastid. It localises to the chloroplast. This is an uncharacterized protein from Euglena gracilis.